The sequence spans 185 residues: Probable chorismate pyruvate-lyase 1 (185 aa).

Substrate contacts are provided by Arg-70, Leu-108, and Glu-166.

This sequence belongs to the UbiC family.

It localises to the cytoplasm. It catalyses the reaction chorismate = 4-hydroxybenzoate + pyruvate. Its pathway is cofactor biosynthesis; ubiquinone biosynthesis. Removes the pyruvyl group from chorismate, with concomitant aromatization of the ring, to provide 4-hydroxybenzoate (4HB) for the ubiquinone pathway. This is Probable chorismate pyruvate-lyase 1 from Pseudomonas fluorescens (strain Pf0-1).